A 141-amino-acid chain; its full sequence is Mitochondrial import inner membrane translocase subunit tim16 (141 aa).

The J-like stretch occupies residues 59–117 (EACKILNVNKPADGTAANMEEVMERFKRLFDANDPEKGGSFYLQSKVVRARERLEAEIK). Residues 119-141 (KMEEKQAEEEVKEGWNPKIYKDR) form a disordered region.

It belongs to the TIM16/PAM16 family. In terms of assembly, heterodimer with tim14/pam18. Component of the PAM complex, at least composed of hsp70-5/ssc1, grpe/mge1, tim44, un-4/pam16, pam17 and tim14/pam18.

The protein resides in the mitochondrion inner membrane. Functionally, essential component of the PAM complex, a complex required for the translocation of transit peptide-containing proteins from the inner membrane into the mitochondrial matrix in an ATP-dependent manner. In the complex, it is required to regulate activity of mtHSP70 (hsp70-5) via its interaction with tim14/pam18. May act by positioning tim14/pam18 in juxtaposition to mtHSP70 at the translocon to maximize ATPase stimulation. The chain is Mitochondrial import inner membrane translocase subunit tim16 (un-4) from Neurospora crassa (strain ATCC 24698 / 74-OR23-1A / CBS 708.71 / DSM 1257 / FGSC 987).